Reading from the N-terminus, the 1196-residue chain is Contactin rig-6 (1196 aa).

The signal sequence occupies residues 1 to 19 (MMMLIRCISIFLLFGFVNA). N-linked (GlcNAc...) asparagine glycans are attached at residues Asn-100 and Asn-195. Ig-like C2-type domains follow at residues 144–225 (PQIS…ARNS) and 232–319 (PPIL…CSLS). 2 disulfide bridges follow: Cys-169–Cys-220 and Cys-263–Cys-316. Asn-343 carries N-linked (GlcNAc...) asparagine glycosylation. 4 Ig-like C2-type domains span residues 355–438 (PQIF…VKLR), 441–533 (PSIL…ALLT), 539–626 (PVFP…VQLI), and 631–730 (PSIK…EFVT). A disulfide bridge links Cys-372 with Cys-420. Asn-457 is a glycosylation site (N-linked (GlcNAc...) asparagine). 2 disulfide bridges follow: Cys-462–Cys-517 and Cys-562–Cys-610. The N-linked (GlcNAc...) asparagine glycan is linked to Asn-644. Cysteines 653 and 718 form a disulfide. 4 consecutive Fibronectin type-III domains span residues 736-844 (SPIA…TAPG), 849-961 (TIDN…SHGE), 963-1057 (KKVS…TKQH), and 1064-1168 (LIGK…LGSP). N-linked (GlcNAc...) asparagine glycans are attached at residues Asn-895, Asn-925, Asn-945, Asn-974, Asn-979, Asn-986, Asn-1002, and Asn-1092. The helical transmembrane segment at 1174-1194 (TTGSSDVPIPSLLLLLLLLLW) threads the bilayer. Ser-1177 is lipidated: GPI-anchor amidated serine. Residues 1178 to 1196 (SDVPIPSLLLLLLLLLWRL) constitute a propeptide, removed in mature form.

This sequence belongs to the immunoglobulin superfamily. Contactin family. Interacts with sax-7; the interaction establishes synaptic connections between neurons. In terms of tissue distribution, expressed in neurons including the I1 and I3 pharyngeal interneurons, NSM and VNC motor neurons, HSN and CAN neurons, the ALM and PLM touch receptor neurons and other unidentified head neurons. Expressed in AVG interneurons. Also expressed in somatic muscles, the excretory canal, the excretory cell and the hypodermis.

The protein localises to the cell membrane. Its subcellular location is the perikaryon. The protein resides in the cell projection. It is found in the axon. It localises to the synapse. The protein localises to the cytoplasm. In terms of biological role, probable cell adhesion protein involved in patterning of the nervous system, playing a role in ALM and PLM touch receptor axon growth and VNC axon navigation. By associating with the transmembrane protein sax-7, mediates axonal interactions to establish synaptic connections between the AVG interneuron and the two PHC sensory neurons. Also required for non-neuronal cell migration in the excretory canal, regulating excretory canal elongation and excretory cell morphogenesis. Plays a role in regulating male mating behavior. This Caenorhabditis elegans protein is Contactin rig-6.